The chain runs to 180 residues: Large ribosomal subunit protein uL5 (180 aa).

This sequence belongs to the universal ribosomal protein uL5 family. In terms of assembly, part of the 50S ribosomal subunit; part of the 5S rRNA/L5/L18/L25 subcomplex. Contacts the 5S rRNA and the P site tRNA. Forms a bridge to the 30S subunit in the 70S ribosome.

This is one of the proteins that bind and probably mediate the attachment of the 5S RNA into the large ribosomal subunit, where it forms part of the central protuberance. In the 70S ribosome it contacts protein S13 of the 30S subunit (bridge B1b), connecting the 2 subunits; this bridge is implicated in subunit movement. Contacts the P site tRNA; the 5S rRNA and some of its associated proteins might help stabilize positioning of ribosome-bound tRNAs. The sequence is that of Large ribosomal subunit protein uL5 from Solibacter usitatus (strain Ellin6076).